Reading from the N-terminus, the 210-residue chain is Thymidylate kinase (210 aa).

11–18 (GLEGAGKS) lines the ATP pocket.

It belongs to the thymidylate kinase family.

It carries out the reaction dTMP + ATP = dTDP + ADP. Phosphorylation of dTMP to form dTDP in both de novo and salvage pathways of dTTP synthesis. The polypeptide is Thymidylate kinase (Vibrio campbellii (strain ATCC BAA-1116)).